The primary structure comprises 147 residues: Large ribosomal subunit protein bL9 (147 aa).

Belongs to the bacterial ribosomal protein bL9 family.

Binds to the 23S rRNA. The polypeptide is Large ribosomal subunit protein bL9 (Clostridium tetani (strain Massachusetts / E88)).